Consider the following 356-residue polypeptide: Arginine kinase (356 aa).

The 83-residue stretch at 9-91 folds into the Phosphagen kinase N-terminal domain; that stretch reads KLEAGFQKLQ…FDPIIEDYHI (83 aa). An L-arginine-binding site is contributed by 64–68; it reads GVGIY. One can recognise a Phosphagen kinase C-terminal domain in the interval 119 to 356; sequence FVISTRVRCG…AELIKLEQSA (238 aa). ATP-binding positions include 122–126 and histidine 185; that span reads STRVR. Glutamate 225 contributes to the L-arginine binding site. Arginine 229 contacts ATP. Residue cysteine 271 coordinates L-arginine. ATP contacts are provided by residues 280 to 284 and 309 to 314; these read RASVH and RGTRGE. Residue glutamate 314 participates in L-arginine binding.

This sequence belongs to the ATP:guanido phosphotransferase family.

The catalysed reaction is L-arginine + ATP = N(omega)-phospho-L-arginine + ADP + H(+). The protein is Arginine kinase (ARGK) of Artemia franciscana (Brine shrimp).